Reading from the N-terminus, the 373-residue chain is Probable G-protein coupled receptor 173 (373 aa).

The Extracellular portion of the chain corresponds to 1–26; it reads MANTTGEPEEVSGALSLPSASAYVKL. An N-linked (GlcNAc...) asparagine glycan is attached at N3. Residues 27 to 47 traverse the membrane as a helical segment; the sequence is VLLGLIMCVSLAGNAILSLLV. Residues 48-59 are Cytoplasmic-facing; sequence LKERALHKAPYY. The helical transmembrane segment at 60–80 threads the bilayer; the sequence is FLLDLCLADGIRSAICFPFVL. Residues 81–97 are Extracellular-facing; it reads ASVRHGSSWTFSALSCK. C96 and C174 form a disulfide bridge. A helical transmembrane segment spans residues 98-118; the sequence is IVAFMAVLFCFHAAFMLFCIS. The Cytoplasmic segment spans residues 119–139; sequence VTRYMAIAHHRFYAKRMTLWT. Residues 140-160 form a helical membrane-spanning segment; that stretch reads CAAVICMAWTLSVAMAFPPVF. Residues 161-188 are Extracellular-facing; that stretch reads DVGTYKFIREEDQCIFEHRYFKANDTLG. N-linked (GlcNAc...) asparagine glycosylation is present at N184. A helical transmembrane segment spans residues 189–209; sequence FMLMLAVLMAATHAVYGKLLL. Over 210–287 the chain is Cytoplasmic; it reads FEYRHRKMKP…VKGEKQLGRM (78 aa). A helical membrane pass occupies residues 288-308; it reads FYAITLLFLLLWSPYIVACYW. Residues 309–322 are Extracellular-facing; sequence RVFVKACAVPHRYL. Residues 323–343 traverse the membrane as a helical segment; sequence ATAVWMSFAQAAVNPIVCFLL. Topologically, residues 344–373 are cytoplasmic; the sequence is NKDLKKCLRTHAPCWGTGGAPAPREPYCVM.

Belongs to the G-protein coupled receptor 1 family. Expressed in the ovary, specifically in granulosa cells of follicles that have passed the primary stage and in oocytes (at protein level). Expressed in preadipocytes.

It is found in the cell membrane. Is a receptor for the SMIM20 derived peptides Phoenixin-14 and Phoenixin-20. It mediates the Phoenixin-14 and Phoenixin-20 augmentation of gonadotropin-releasing hormone (GNRH) signaling in the hypothalamus and pituitary gland. In the ovary, it mediates the effects of Phoenixin-14 and Phoenixin-20 induced granulosa cell proliferation during follicular growth. The protein is Probable G-protein coupled receptor 173 (Gpr173) of Mus musculus (Mouse).